We begin with the raw amino-acid sequence, 466 residues long: GTPase Der (466 aa).

EngA-type G domains are found at residues 30-193 (PVVA…PEVS) and 203-376 (RRVA…ASWD). GTP is bound by residues 36–43 (GRPNVGKS), 83–87 (DTGGW), 145–148 (NKVD), 209–216 (GKPNVGKS), 256–260 (DTAGL), and 321–324 (NKWD). The 83-residue stretch at 377–459 (TRIATGPLNS…PIRINVRVRE (83 aa)) folds into the KH-like domain.

The protein belongs to the TRAFAC class TrmE-Era-EngA-EngB-Septin-like GTPase superfamily. EngA (Der) GTPase family. In terms of assembly, associates with the 50S ribosomal subunit.

Functionally, GTPase that plays an essential role in the late steps of ribosome biogenesis. This Mycolicibacterium paratuberculosis (strain ATCC BAA-968 / K-10) (Mycobacterium paratuberculosis) protein is GTPase Der.